The chain runs to 662 residues: Interleukin-12 receptor subunit beta-1 (662 aa).

The first 23 residues, 1 to 23 (MEPLVTWVVPLLFLFLLSRQGAA), serve as a signal peptide directing secretion. Residues 24–545 (CRTSECCFQD…RFSIEVQVSD (522 aa)) are Extracellular-facing. Fibronectin type-III domains follow at residues 46 to 136 (GPRD…LYNS), 142 to 234 (PLGD…VPPE), 237 to 337 (PQPQ…IPAD), 338 to 444 (THTE…GNAS), and 448 to 542 (TPHH…IEVQ). Cys-52 and Cys-62 are oxidised to a cystine. A glycan (N-linked (GlcNAc...) asparagine) is linked at Asn-121. The WSXWS motif motif lies at 222-226 (WSKWS). Asn-329, Asn-346, Asn-352, Asn-442, and Asn-456 each carry an N-linked (GlcNAc...) asparagine glycan. A helical transmembrane segment spans residues 546–570 (WLIFFASLGSFLSILLVGVLGYLGL). Over 571 to 662 (NRAARHLCPP…EDGDRCKAKM (92 aa)) the chain is Cytoplasmic. The Box 1 motif motif lies at 577–585 (LCPPLPTPC). Residues 626–637 (GERTEPLEKTEL) are compositionally biased toward basic and acidic residues. A disordered region spans residues 626 to 648 (GERTEPLEKTELPEGAPELALDT).

This sequence belongs to the type I cytokine receptor family. Type 2 subfamily. Dimer or oligomer; disulfide-linked. Interacts with IL12RB2 to form the high affinity IL12 receptor. Heterodimer with IL23R; in presence of IL23. The heterodimer forms the IL23 receptor.

It is found in the membrane. In terms of biological role, functions as an interleukin receptor which binds interleukin-12 with low affinity and is involved in IL12 transduction. Associated with IL12RB2 it forms a functional, high affinity receptor for IL12. Also associates with IL23R to form the interleukin-23 receptor which functions in IL23 signal transduction probably through activation of the Jak-Stat signaling cascade. The polypeptide is Interleukin-12 receptor subunit beta-1 (IL12RB1) (Homo sapiens (Human)).